A 253-amino-acid chain; its full sequence is MTEFVVLIPARLDSSRLPGKALADIHGKPMVVRVAEQAAKSKAARVVVATDHPDIQTVCQAHGIEAVMTSNRHESGTTRLAEASAALKLPPHLIVVNVQGDEPLIAPELIDRTAEVLVENNVQMATAAHELHDFDELMNPNAVKVVLDKNRNAIYFSRAPIPYLRDAMRAGKREMPSETAVLRHIGIYAYRAGFLQRYAEMSVSPLETIESLEQLRVLWHGYPIAVETAKEAPAAGVDTQEDLDRVRAVFQTV.

This sequence belongs to the KdsB family.

It localises to the cytoplasm. It catalyses the reaction 3-deoxy-alpha-D-manno-oct-2-ulosonate + CTP = CMP-3-deoxy-beta-D-manno-octulosonate + diphosphate. Its pathway is nucleotide-sugar biosynthesis; CMP-3-deoxy-D-manno-octulosonate biosynthesis; CMP-3-deoxy-D-manno-octulosonate from 3-deoxy-D-manno-octulosonate and CTP: step 1/1. It functions in the pathway bacterial outer membrane biogenesis; lipopolysaccharide biosynthesis. Functionally, activates KDO (a required 8-carbon sugar) for incorporation into bacterial lipopolysaccharide in Gram-negative bacteria. The protein is 3-deoxy-manno-octulosonate cytidylyltransferase of Neisseria meningitidis serogroup C (strain 053442).